The sequence spans 107 residues: Iron-binding protein IscA (107 aa).

Residues cysteine 35, cysteine 99, and cysteine 101 each coordinate Fe cation.

The protein belongs to the HesB/IscA family. Homodimer; may form tetramers and higher multimers. Requires Fe cation as cofactor.

In terms of biological role, is able to transfer iron-sulfur clusters to apo-ferredoxin. Multiple cycles of [2Fe2S] cluster formation and transfer are observed, suggesting that IscA acts catalytically. Recruits intracellular free iron so as to provide iron for the assembly of transient iron-sulfur cluster in IscU in the presence of IscS, L-cysteine and the thioredoxin reductase system TrxA/TrxB. The sequence is that of Iron-binding protein IscA from Photorhabdus laumondii subsp. laumondii (strain DSM 15139 / CIP 105565 / TT01) (Photorhabdus luminescens subsp. laumondii).